A 164-amino-acid chain; its full sequence is Putative 4-hydroxy-4-methyl-2-oxoglutarate aldolase (164 aa).

Residues 79-82 (GDRL) and Arg101 contribute to the substrate site. Asp102 is an a divalent metal cation binding site.

This sequence belongs to the class II aldolase/RraA-like family. In terms of assembly, homotrimer. Requires a divalent metal cation as cofactor.

The enzyme catalyses 4-hydroxy-4-methyl-2-oxoglutarate = 2 pyruvate. It carries out the reaction oxaloacetate + H(+) = pyruvate + CO2. Functionally, catalyzes the aldol cleavage of 4-hydroxy-4-methyl-2-oxoglutarate (HMG) into 2 molecules of pyruvate. Also contains a secondary oxaloacetate (OAA) decarboxylase activity due to the common pyruvate enolate transition state formed following C-C bond cleavage in the retro-aldol and decarboxylation reactions. The polypeptide is Putative 4-hydroxy-4-methyl-2-oxoglutarate aldolase (Halorhodospira halophila (strain DSM 244 / SL1) (Ectothiorhodospira halophila (strain DSM 244 / SL1))).